Here is a 206-residue protein sequence, read N- to C-terminus: Ribosomal RNA large subunit methyltransferase E (206 aa).

Gly-60, Trp-62, Asp-80, Asp-96, and Asp-121 together coordinate S-adenosyl-L-methionine. Lys-161 (proton acceptor) is an active-site residue.

The protein belongs to the class I-like SAM-binding methyltransferase superfamily. RNA methyltransferase RlmE family.

The protein resides in the cytoplasm. The catalysed reaction is uridine(2552) in 23S rRNA + S-adenosyl-L-methionine = 2'-O-methyluridine(2552) in 23S rRNA + S-adenosyl-L-homocysteine + H(+). Specifically methylates the uridine in position 2552 of 23S rRNA at the 2'-O position of the ribose in the fully assembled 50S ribosomal subunit. The chain is Ribosomal RNA large subunit methyltransferase E from Saccharophagus degradans (strain 2-40 / ATCC 43961 / DSM 17024).